We begin with the raw amino-acid sequence, 140 residues long: Probable prefoldin subunit 6 (140 aa).

This sequence belongs to the prefoldin subunit beta family. As to quaternary structure, heterohexamer of two PFD-alpha type and four PFD-beta type subunits.

Its function is as follows. Binds specifically to cytosolic chaperonin (c-CPN) and transfers target proteins to it. Binds to nascent polypeptide chain and promotes folding in an environment in which there are many competing pathways for nonnative proteins. This chain is Probable prefoldin subunit 6 (pfdn6), found in Dictyostelium discoideum (Social amoeba).